Reading from the N-terminus, the 200-residue chain is uncharacterized protein (200 aa).

The segment at 1 to 21 is disordered; it reads MSNSAQRDARNSRDESARASD. Over residues 7 to 21 the composition is skewed to basic and acidic residues; the sequence is RDARNSRDESARASD.

This is an uncharacterized protein from Mycobacterium tuberculosis (strain CDC 1551 / Oshkosh).